We begin with the raw amino-acid sequence, 163 residues long: MIPLPIRPLSHSEFAPFGDVIEPDDAKSFPINAGKCIRYHDLARVETSGPEARTLVSLLKGEPYDIPLTLKMVERHPLGSQAFIPLTGNPFLVVVAPDEGGEPGEPIAFETGPGQGVNIAQNVWHGILTPLRSTSEFVVIDRGGSGCNLEEHFFEKPYQVEYA.

The protein belongs to the ureidoglycolate lyase family. In terms of assembly, homodimer. The cofactor is Ni(2+).

It carries out the reaction (S)-ureidoglycolate = urea + glyoxylate. It functions in the pathway nitrogen metabolism; (S)-allantoin degradation. Functionally, catalyzes the catabolism of the allantoin degradation intermediate (S)-ureidoglycolate, generating urea and glyoxylate. Involved in the utilization of allantoin as nitrogen source. In Rhizobium meliloti (strain 1021) (Ensifer meliloti), this protein is Ureidoglycolate lyase 2.